The primary structure comprises 367 residues: DNA replication and repair protein RecF (367 aa).

30 to 37 contributes to the ATP binding site; the sequence is GANGSGKT.

The protein belongs to the RecF family.

The protein localises to the cytoplasm. In terms of biological role, the RecF protein is involved in DNA metabolism; it is required for DNA replication and normal SOS inducibility. RecF binds preferentially to single-stranded, linear DNA. It also seems to bind ATP. The sequence is that of DNA replication and repair protein RecF from Pseudomonas fluorescens (strain SBW25).